We begin with the raw amino-acid sequence, 317 residues long: Beta-ketoacyl-[acyl-carrier-protein] synthase III (317 aa).

Active-site residues include Cys112 and His244. An ACP-binding region spans residues 245 to 249 (QANLR). Residue Asn274 is part of the active site.

This sequence belongs to the thiolase-like superfamily. FabH family. Homodimer.

It localises to the cytoplasm. It catalyses the reaction malonyl-[ACP] + acetyl-CoA + H(+) = 3-oxobutanoyl-[ACP] + CO2 + CoA. It functions in the pathway lipid metabolism; fatty acid biosynthesis. Its function is as follows. Catalyzes the condensation reaction of fatty acid synthesis by the addition to an acyl acceptor of two carbons from malonyl-ACP. Catalyzes the first condensation reaction which initiates fatty acid synthesis and may therefore play a role in governing the total rate of fatty acid production. Possesses both acetoacetyl-ACP synthase and acetyl transacylase activities. Its substrate specificity determines the biosynthesis of branched-chain and/or straight-chain of fatty acids. This Salmonella arizonae (strain ATCC BAA-731 / CDC346-86 / RSK2980) protein is Beta-ketoacyl-[acyl-carrier-protein] synthase III.